Reading from the N-terminus, the 292-residue chain is Probable septum site-determining protein MinC (292 aa).

The interval 109–188 (QVIDTAPPND…PQSSSALVIT (80 aa)) is disordered. The span at 140–150 (QDDEADGEQAD) shows a compositional bias: acidic residues. A compositionally biased stretch (polar residues) spans 171–185 (ANRPTATPPQSSSAL).

This sequence belongs to the MinC family. As to quaternary structure, interacts with MinD and FtsZ.

Functionally, cell division inhibitor that blocks the formation of polar Z ring septums. Rapidly oscillates between the poles of the cell to destabilize FtsZ filaments that have formed before they mature into polar Z rings. Prevents FtsZ polymerization. This Bordetella pertussis (strain Tohama I / ATCC BAA-589 / NCTC 13251) protein is Probable septum site-determining protein MinC.